The chain runs to 191 residues: Fe/S biogenesis protein NfuA (191 aa).

Positions 149 and 152 each coordinate [4Fe-4S] cluster.

The protein belongs to the NfuA family. Homodimer. The cofactor is [4Fe-4S] cluster.

Involved in iron-sulfur cluster biogenesis. Binds a 4Fe-4S cluster, can transfer this cluster to apoproteins, and thereby intervenes in the maturation of Fe/S proteins. Could also act as a scaffold/chaperone for damaged Fe/S proteins. This Pectobacterium atrosepticum (strain SCRI 1043 / ATCC BAA-672) (Erwinia carotovora subsp. atroseptica) protein is Fe/S biogenesis protein NfuA.